Here is a 231-residue protein sequence, read N- to C-terminus: Lipoprotein-releasing system ATP-binding protein LolD (231 aa).

Residues 6–230 (LSCKNVSKKY…DGELELVINS (225 aa)) enclose the ABC transporter domain. An ATP-binding site is contributed by 42-49 (GLSGSGKT).

Belongs to the ABC transporter superfamily. Lipoprotein translocase (TC 3.A.1.125) family. The complex is composed of two ATP-binding proteins (LolD) and two transmembrane proteins (LolC and LolE).

It is found in the cell inner membrane. Its function is as follows. Part of the ABC transporter complex LolCDE involved in the translocation of mature outer membrane-directed lipoproteins, from the inner membrane to the periplasmic chaperone, LolA. Responsible for the formation of the LolA-lipoprotein complex in an ATP-dependent manner. The polypeptide is Lipoprotein-releasing system ATP-binding protein LolD (Francisella tularensis subsp. holarctica (strain OSU18)).